The chain runs to 160 residues: Ribosome maturation factor RimP (160 aa).

This sequence belongs to the RimP family.

Its subcellular location is the cytoplasm. Functionally, required for maturation of 30S ribosomal subunits. The chain is Ribosome maturation factor RimP from Orientia tsutsugamushi (strain Boryong) (Rickettsia tsutsugamushi).